The primary structure comprises 132 residues: UPF0332 protein TM_1000 (132 aa).

The protein belongs to the UPF0332 family.

This Thermotoga maritima (strain ATCC 43589 / DSM 3109 / JCM 10099 / NBRC 100826 / MSB8) protein is UPF0332 protein TM_1000.